The chain runs to 62 residues: uncharacterized protein (62 aa).

This is an uncharacterized protein from Mesomycoplasma hyorhinis (Mycoplasma hyorhinis).